The following is a 673-amino-acid chain: DNA ligase (673 aa).

NAD(+) is bound by residues aspartate 36–aspartate 40, serine 85–leucine 86, and glutamate 116. Catalysis depends on lysine 118, which acts as the N6-AMP-lysine intermediate. NAD(+) is bound by residues arginine 139, glutamate 176, lysine 291, and lysine 315. Residues cysteine 409, cysteine 412, cysteine 427, and cysteine 433 each contribute to the Zn(2+) site. The BRCT domain occupies arginine 592–arginine 673.

This sequence belongs to the NAD-dependent DNA ligase family. LigA subfamily. Mg(2+) is required as a cofactor. The cofactor is Mn(2+).

The catalysed reaction is NAD(+) + (deoxyribonucleotide)n-3'-hydroxyl + 5'-phospho-(deoxyribonucleotide)m = (deoxyribonucleotide)n+m + AMP + beta-nicotinamide D-nucleotide.. In terms of biological role, DNA ligase that catalyzes the formation of phosphodiester linkages between 5'-phosphoryl and 3'-hydroxyl groups in double-stranded DNA using NAD as a coenzyme and as the energy source for the reaction. It is essential for DNA replication and repair of damaged DNA. The chain is DNA ligase from Alkalilimnicola ehrlichii (strain ATCC BAA-1101 / DSM 17681 / MLHE-1).